Consider the following 696-residue polypeptide: Catalase (696 aa).

Residues histidine 64 and asparagine 137 contribute to the active site. The disordered stretch occupies residues 187 to 211; sequence SLAQGSQISSERGSPKAYSNTEPNK. The segment covering 189 to 208 has biased composition (polar residues); that stretch reads AQGSQISSERGSPKAYSNTE. Tyrosine 353 provides a ligand contact to heme.

It belongs to the catalase family. The cofactor is heme.

It catalyses the reaction 2 H2O2 = O2 + 2 H2O. Occurs in almost all aerobically respiring organisms and serves to protect cells from the toxic effects of hydrogen peroxide. The sequence is that of Catalase from Penicillium janthinellum (Penicillium vitale).